The primary structure comprises 449 residues: KASVGFKAGVKDYRLTYYTPDYETKDTDILAAFRVTPQPGVPAEEAGAAVAAESSTGTWTTVWTDGLTSLDRYKGRCYHIEAVIGEENQYICYVAYPLDLFEEGSVTNMFTSIVGNVFGFKALRALRLEDLRIPPAYSKTFQGPPHGIQVERDKLNKYGRPLLGCTIKPKLGLSAKNYGRAVYECLRGGLDFTKDDENVNSQPFMRWRDRFVFCAEALYKAQAETGEIKGHYLNATAGTCEEMMKRAVFARELGAPIVMHDYLTGGFTANTSLAHYCRDNGLLLHIHRAMHAVIDRQKNHGMHFRVLAKGLRMSGGDHIHAGTVVGKLEGEREITLGFVDLLRDDFIEKDRSRGIFFTQDWVSMPGVIPVASGGIHVWHMPALTEIFGDDSVLQFGGGTLGHPWGNAPGAVANRVALEACVQARNEGRDLAREGNEIIREAAKWSPELA.

N6,N6,N6-trimethyllysine is present on Lys7. 2 residues coordinate substrate: Asn116 and Thr166. The Proton acceptor role is filled by Lys168. Lys170 lines the substrate pocket. 3 residues coordinate Mg(2+): Lys194, Asp196, and Glu197. At Lys194 the chain carries N6-carboxylysine. His287 acts as the Proton acceptor in catalysis. Substrate-binding residues include Arg288, His320, and Ser372.

Belongs to the RuBisCO large chain family. Type I subfamily. Heterohexadecamer of 8 large chains and 8 small chains; disulfide-linked. The disulfide link is formed within the large subunit homodimers. Requires Mg(2+) as cofactor. Post-translationally, the disulfide bond which can form in the large chain dimeric partners within the hexadecamer appears to be associated with oxidative stress and protein turnover.

It is found in the plastid. It localises to the chloroplast. The catalysed reaction is 2 (2R)-3-phosphoglycerate + 2 H(+) = D-ribulose 1,5-bisphosphate + CO2 + H2O. It carries out the reaction D-ribulose 1,5-bisphosphate + O2 = 2-phosphoglycolate + (2R)-3-phosphoglycerate + 2 H(+). Functionally, ruBisCO catalyzes two reactions: the carboxylation of D-ribulose 1,5-bisphosphate, the primary event in carbon dioxide fixation, as well as the oxidative fragmentation of the pentose substrate in the photorespiration process. Both reactions occur simultaneously and in competition at the same active site. In Liriope muscari (Big blue lilyturf), this protein is Ribulose bisphosphate carboxylase large chain.